The following is a 554-amino-acid chain: Phosphoglucomutase (554 aa).

Residue Arg-21 coordinates alpha-D-glucose 1,6-bisphosphate. At Thr-111 the chain carries Phosphothreonine. Ser-113 serves as a coordination point for alpha-D-glucose 1,6-bisphosphate. Ser-113 acts as the Phosphoserine intermediate in catalysis. 4 residues coordinate Mg(2+): Ser-113, Asp-278, Asp-280, and Asp-282. Ser-113 is subject to Phosphoserine. Alpha-D-glucose 1,6-bisphosphate is bound by residues Asp-282, Arg-283, Thr-346, Glu-365, Ser-367, and Lys-378.

This sequence belongs to the phosphohexose mutase family. In terms of assembly, monomer. The cofactor is Mg(2+).

Its subcellular location is the cytoplasm. It localises to the nucleus. The catalysed reaction is alpha-D-glucose 1-phosphate = alpha-D-glucose 6-phosphate. It catalyses the reaction O-phospho-L-seryl-[protein] + alpha-D-glucose 1-phosphate = alpha-D-glucose 1,6-bisphosphate + L-seryl-[protein]. It carries out the reaction alpha-D-glucose 1,6-bisphosphate + L-seryl-[protein] = O-phospho-L-seryl-[protein] + alpha-D-glucose 6-phosphate. Its function is as follows. Catalyzes the reversible isomerization of alpha-D-glucose 1-phosphate to alpha-D-glucose 6-phosphate. The mechanism proceeds via the intermediate compound alpha-D-glucose 1,6-bisphosphate. Key enzyme in hexose metabolism. The reverse reaction is an essential step for biosynthesis because glucose 1-phosphate is the starting point for the synthesis of UDP-glucose, which acts as a precursor for the synthesis of oligosaccharides and trehalose. This chain is Phosphoglucomutase, found in Schizosaccharomyces pombe (strain 972 / ATCC 24843) (Fission yeast).